A 265-amino-acid polypeptide reads, in one-letter code: Tryptophan synthase alpha chain (265 aa).

Active-site proton acceptor residues include Glu48 and Asp59.

This sequence belongs to the TrpA family. As to quaternary structure, tetramer of two alpha and two beta chains.

It catalyses the reaction (1S,2R)-1-C-(indol-3-yl)glycerol 3-phosphate + L-serine = D-glyceraldehyde 3-phosphate + L-tryptophan + H2O. It participates in amino-acid biosynthesis; L-tryptophan biosynthesis; L-tryptophan from chorismate: step 5/5. Its function is as follows. The alpha subunit is responsible for the aldol cleavage of indoleglycerol phosphate to indole and glyceraldehyde 3-phosphate. This is Tryptophan synthase alpha chain from Vesicomyosocius okutanii subsp. Calyptogena okutanii (strain HA).